Consider the following 662-residue polypeptide: DNA ligase (662 aa).

NAD(+) is bound by residues 31–35 (DKDYD) and 79–80 (SL). Lys-121 (N6-AMP-lysine intermediate) is an active-site residue. Residues Arg-143, Glu-177, and Lys-313 each coordinate NAD(+). Cys-406, Cys-409, Cys-422, and Cys-428 together coordinate Zn(2+). In terms of domain architecture, BRCT spans 586–662 (VLESPFMGKT…LSEEEFENMI (77 aa)).

The protein belongs to the NAD-dependent DNA ligase family. LigA subfamily. Requires Mg(2+) as cofactor. The cofactor is Mn(2+).

The enzyme catalyses NAD(+) + (deoxyribonucleotide)n-3'-hydroxyl + 5'-phospho-(deoxyribonucleotide)m = (deoxyribonucleotide)n+m + AMP + beta-nicotinamide D-nucleotide.. Functionally, DNA ligase that catalyzes the formation of phosphodiester linkages between 5'-phosphoryl and 3'-hydroxyl groups in double-stranded DNA using NAD as a coenzyme and as the energy source for the reaction. It is essential for DNA replication and repair of damaged DNA. The polypeptide is DNA ligase (Clostridium perfringens (strain ATCC 13124 / DSM 756 / JCM 1290 / NCIMB 6125 / NCTC 8237 / Type A)).